The following is a 1223-amino-acid chain: DNA-directed RNA polymerase subunit beta' (1223 aa).

The Zn(2+) site is built by C60, C62, C75, and C78. Positions 449, 451, and 453 each coordinate Mg(2+). Zn(2+) is bound by residues C818, C892, C899, and C902.

It belongs to the RNA polymerase beta' chain family. In terms of assembly, the RNAP catalytic core consists of 2 alpha, 1 beta, 1 beta' and 1 omega subunit. When a sigma factor is associated with the core the holoenzyme is formed, which can initiate transcription. Requires Mg(2+) as cofactor. It depends on Zn(2+) as a cofactor.

The enzyme catalyses RNA(n) + a ribonucleoside 5'-triphosphate = RNA(n+1) + diphosphate. In terms of biological role, DNA-dependent RNA polymerase catalyzes the transcription of DNA into RNA using the four ribonucleoside triphosphates as substrates. This Lactobacillus gasseri (strain ATCC 33323 / DSM 20243 / BCRC 14619 / CIP 102991 / JCM 1131 / KCTC 3163 / NCIMB 11718 / NCTC 13722 / AM63) protein is DNA-directed RNA polymerase subunit beta'.